Consider the following 393-residue polypeptide: Branched-chain-amino-acid aminotransferase, mitochondrial (393 aa).

The transit peptide at Met1–Cys27 directs the protein to the mitochondrion. Tyr169 serves as a coordination point for substrate. Residue Lys230 is modified to N6-(pyridoxal phosphate)lysine. At Lys322 the chain carries N6-acetyllysine.

The protein belongs to the class-IV pyridoxal-phosphate-dependent aminotransferase family. As to quaternary structure, homodimer. Pyridoxal 5'-phosphate is required as a cofactor. As to expression, expressed in all tissues.

It is found in the mitochondrion. It catalyses the reaction L-leucine + 2-oxoglutarate = 4-methyl-2-oxopentanoate + L-glutamate. The enzyme catalyses L-isoleucine + 2-oxoglutarate = (S)-3-methyl-2-oxopentanoate + L-glutamate. It carries out the reaction L-valine + 2-oxoglutarate = 3-methyl-2-oxobutanoate + L-glutamate. Its function is as follows. Catalyzes the first reaction in the catabolism of the essential branched chain amino acids leucine, isoleucine, and valine. May also function as a transporter of branched chain alpha-keto acids. This is Branched-chain-amino-acid aminotransferase, mitochondrial (Bcat2) from Rattus norvegicus (Rat).